Reading from the N-terminus, the 761-residue chain is Membrane protein of ER body-like protein (761 aa).

Disordered stretches follow at residues 1 to 85 (MGSA…GEHT) and 120 to 162 (GSES…RSRE). The segment covering 22–31 (EVEEDDEQIV) has biased composition (acidic residues). Residues 48 to 65 (VDSSTITNTSSSSSSSFS) show a composition bias toward low complexity. Residues 74–85 (PDFHSNGDGEHT) are compositionally biased toward basic and acidic residues. Polar residues predominate over residues 136-154 (TADLNGEQTQLEPENGSTS). The stretch at 186–206 (IEEEVDFEDVEYHDVENMMDK) forms a coiled coil. Disordered stretches follow at residues 338-374 (SSSV…TGSA) and 416-448 (QTQQ…PSHG). Over residues 416-432 (QTQQKIDNDDSSTADGN) the composition is skewed to polar residues. 5 helical membrane-spanning segments follow: residues 549–569 (IVYG…SAAG), 573–593 (SMLN…ILII), 640–660 (VAIL…YFSF), 670–690 (VASV…AKAH), and 702–722 (ILYY…VGNF).

It belongs to the CCC1 family.

It localises to the endoplasmic reticulum membrane. In terms of biological role, not essential for the accumulation of ER body components, including PYK10. The chain is Membrane protein of ER body-like protein (MEBL) from Arabidopsis thaliana (Mouse-ear cress).